Here is a 211-residue protein sequence, read N- to C-terminus: Protein-L-isoaspartate O-methyltransferase (211 aa).

Ser-62 is an active-site residue.

The protein belongs to the methyltransferase superfamily. L-isoaspartyl/D-aspartyl protein methyltransferase family.

The protein localises to the cytoplasm. It carries out the reaction [protein]-L-isoaspartate + S-adenosyl-L-methionine = [protein]-L-isoaspartate alpha-methyl ester + S-adenosyl-L-homocysteine. Its function is as follows. Catalyzes the methyl esterification of L-isoaspartyl residues in peptides and proteins that result from spontaneous decomposition of normal L-aspartyl and L-asparaginyl residues. It plays a role in the repair and/or degradation of damaged proteins. The chain is Protein-L-isoaspartate O-methyltransferase from Shewanella oneidensis (strain ATCC 700550 / JCM 31522 / CIP 106686 / LMG 19005 / NCIMB 14063 / MR-1).